The sequence spans 587 residues: 2-succinyl-5-enolpyruvyl-6-hydroxy-3-cyclohexene-1-carboxylate synthase (587 aa).

It belongs to the TPP enzyme family. MenD subfamily. In terms of assembly, homodimer. Requires Mg(2+) as cofactor. Mn(2+) serves as cofactor. It depends on thiamine diphosphate as a cofactor.

The enzyme catalyses isochorismate + 2-oxoglutarate + H(+) = 5-enolpyruvoyl-6-hydroxy-2-succinyl-cyclohex-3-ene-1-carboxylate + CO2. It functions in the pathway quinol/quinone metabolism; 1,4-dihydroxy-2-naphthoate biosynthesis; 1,4-dihydroxy-2-naphthoate from chorismate: step 2/7. It participates in cofactor biosynthesis; phylloquinone biosynthesis. Catalyzes the thiamine diphosphate-dependent decarboxylation of 2-oxoglutarate and the subsequent addition of the resulting succinic semialdehyde-thiamine pyrophosphate anion to isochorismate to yield 2-succinyl-5-enolpyruvyl-6-hydroxy-3-cyclohexene-1-carboxylate (SEPHCHC). This Prochlorococcus marinus (strain AS9601) protein is 2-succinyl-5-enolpyruvyl-6-hydroxy-3-cyclohexene-1-carboxylate synthase.